Reading from the N-terminus, the 586-residue chain is Axin-like protein pry-1 (586 aa).

The required for interaction with apr-1 stretch occupies residues 1-135 (METHLGWARS…FIEAFNKMSS (135 aa)). An RGS domain is found at 10–131 (SLEAVLSDRS…GSEEFIEAFN (122 aa)). Disordered stretches follow at residues 137-168 (TADQ…KSAA), 344-442 (MTDD…DSFA), and 478-501 (TSSL…HSKI). 2 stretches are compositionally biased toward polar residues: residues 151–168 (HQNT…KSAA) and 368–388 (GEGS…QLHN). Low complexity predominate over residues 421–442 (SQSMCAPSYSSASSSYSRDSFA). Positions 486–501 (RRQHRKAPTPKKHSKI) are enriched in basic residues. Residues 505-586 (LSNLITISYL…FEGRIAAELR (82 aa)) form the DIX domain.

Interacts (via N-terminus) with apr-1 (via C-terminus). Interacts with bar-1 (via ARM repeats), gsk-3, and mig-5. In terms of tissue distribution, expressed in hypodermal cells (seam cells) V5 and V6, Q neuroblasts, ventral hypodermal cells P7/8 to P11/12, body wall muscle cells and neurons in the head, the tail and the ventral nerve cord.

The protein resides in the cell membrane. The protein localises to the nucleus. It is found in the cytoplasm. It localises to the cell cortex. In terms of biological role, works in parallel with axl-1 in negatively regulating bar-1 signaling in vulval precursor cells and Q neuroblasts. Inhibits Wnt signaling, which affects tissue specific expression of Hox genes, egl-5, lin-39 and mab-5. This in turn affects QR (postembryonic neuroblast) cell migration, vulval cell fate specification, and the development of sensory structures by the seam cell lineage. Has a role in alae V cell patterning, ray formation in the male tail and axon guidance. Does not affect B cell polarity. In Caenorhabditis elegans, this protein is Axin-like protein pry-1.